A 608-amino-acid polypeptide reads, in one-letter code: Aspartate--tRNA(Asp/Asn) ligase (608 aa).

E187 lines the L-aspartate pocket. Positions 211–214 are aspartate; it reads QQFK. 2 residues coordinate L-aspartate: R233 and H461. 233–235 serves as a coordination point for ATP; sequence RDE. E495 contacts ATP. Residue R502 coordinates L-aspartate. 547–550 is an ATP binding site; it reads GLDR.

This sequence belongs to the class-II aminoacyl-tRNA synthetase family. Type 1 subfamily. Homodimer.

The protein resides in the cytoplasm. The catalysed reaction is tRNA(Asx) + L-aspartate + ATP = L-aspartyl-tRNA(Asx) + AMP + diphosphate. Its function is as follows. Aspartyl-tRNA synthetase with relaxed tRNA specificity since it is able to aspartylate not only its cognate tRNA(Asp) but also tRNA(Asn). Reaction proceeds in two steps: L-aspartate is first activated by ATP to form Asp-AMP and then transferred to the acceptor end of tRNA(Asp/Asn). The chain is Aspartate--tRNA(Asp/Asn) ligase from Prosthecochloris aestuarii (strain DSM 271 / SK 413).